An 84-amino-acid polypeptide reads, in one-letter code: Cell division topological specificity factor (84 aa).

Belongs to the MinE family.

In terms of biological role, prevents the cell division inhibition by proteins MinC and MinD at internal division sites while permitting inhibition at polar sites. This ensures cell division at the proper site by restricting the formation of a division septum at the midpoint of the long axis of the cell. This is Cell division topological specificity factor from Burkholderia cenocepacia (strain HI2424).